A 271-amino-acid chain; its full sequence is Urease accessory protein UreD (271 aa).

It belongs to the UreD family. In terms of assembly, ureD, UreF and UreG form a complex that acts as a GTP-hydrolysis-dependent molecular chaperone, activating the urease apoprotein by helping to assemble the nickel containing metallocenter of UreC. The UreE protein probably delivers the nickel.

Its subcellular location is the cytoplasm. In terms of biological role, required for maturation of urease via the functional incorporation of the urease nickel metallocenter. The chain is Urease accessory protein UreD from Bacillus sp. (strain TB-90).